We begin with the raw amino-acid sequence, 997 residues long: Burkholderia TALE-like protein 2 (997 aa).

Residues 19–50 (LSPLERIKIEKHYGGGATLAFISNQHDELAQV) form a Cryptic repeat -1 repeat. A Cryptic repeat 0 repeat occupies 51 to 83 (LSRADILKIASYDCAAQALQAVLDCGPMLGKRG). Core repeat repeat units follow at residues 84–116 (FSRADIVRIAGNGGGAQALYSVLDVEPTLGKRG), 117–147 (FSQVDVVKIAGGGAQALHTVLEIGPTLGERG), 148–180 (FSRGDIVTIAGNNGGAQALQAVLELEPTLRERG), 181–213 (FNQADIVKIAGNGGGAQALQAVLDVEPALGKRG), 214–244 (FSRVDIAKIAGGGAQALQAVLGLEPTLRKRG), 245–277 (FHPTDIIKIAGNNGGAQALQAVLDLELMLRERG), 278–310 (FSQADIVKMASNIGGAQALQAVLNLEPALCERG), 311–343 (FSQPDIVKMAGNSGGAQALQAVLDLELAFRERG), 344–376 (FSQADIVKMASNIGGAQALQAVLELEPALHERG), 377–409 (FSQANIVKMAGNSGGAQALQAVLDLELVFRERG), 410–442 (FSQPEIVEMAGNIGGAQALHTVLDLELAFRERG), 443–475 (VRQADIVKIVGNNGGAQALQAVFELEPTLRERG), 476–508 (FNQATIVKIAANGGGAQALYSVLDVEPTLDKRG), 509–539 (FSRVDIVKIAGGGAQALHTAFELEPTLRKRG), 540–572 (FNPTDIVKIAGNKGGAQALQAVLELEPALRERG), 573–605 (FNQATIVKMAGNAGGAQALYSVLDVEPALRERG), 606–638 (FSQPEIVKIAGNIGGAQALHTVLELEPTLHKRG), 639–671 (FNPTDIVKIAGNSGGAQALQAVLELEPAFRERG), 672–704 (FGQPDIVKMASNIGGAQALQAVLELEPALRERG), 705–737 (FSQPDIVEMAGNIGGAQALQAVLELEPAFRERG), 738–770 (FSQSDIVKIAGNIGGAQALQAVLELEPTLRESD), 771–803 (FRQADIVNIAGNDGSTQALKAVIEHGPRLRQRG), 804–836 (FNRASIVKIAGNSGGAQALQAVLKHGPTLDERG), 837–869 (FNLTNIVKIAGNGGGAQALKAVIEHGPTLQQRG), 870–902 (FNLTDIVEMAGKGGGAQALKAVLEHGPTLRQRG), 903–935 (FNLIDIVEMASNTGGAQALKTVLEHGPTLRQRD), and 936–967 (LSLIDIVEIASNGGAQALKAVLKYGPVLMQAG). Residues 84–967 (FSRADIVRIA…KYGPVLMQAG (884 aa)) form a buD domain region. 4 ANK repeats span residues 772–801 (RQADIVNIAGNDGSTQALKAVIEHGPRLRQ), 805–834 (NRASIVKIAGNSGGAQALQAVLKHGPTLDE), 838–867 (NLTNIVKIAGNGGGAQALKAVIEHGPTLQQ), and 871–900 (NLTDIVEMAGKGGGAQALKAVLEHGPTLRQ). A Cryptic repeat +1 repeat occupies 968 to 997 (RSNEEIVHVAARRGGAGRIRKMVALLLERQ).

This sequence belongs to the transcription activator-like effector (TALE) family. Bat subfamily.

Functionally, binds to DNA in a sequence-specific manner. The polypeptide is Burkholderia TALE-like protein 2 (Mycetohabitans rhizoxinica (strain DSM 19002 / CIP 109453 / HKI 454) (Paraburkholderia rhizoxinica)).